The sequence spans 79 residues: D-alanyl carrier protein (79 aa).

The region spanning 2 to 79 is the Carrier domain; sequence AEFKEQVLDI…MVIKKLEEIR (78 aa). Position 37 is an O-(pantetheine 4'-phosphoryl)serine (Ser37).

This sequence belongs to the DltC family. 4'-phosphopantetheine is transferred from CoA to a specific serine of apo-DCP.

The protein localises to the cytoplasm. Its pathway is cell wall biogenesis; lipoteichoic acid biosynthesis. Carrier protein involved in the D-alanylation of lipoteichoic acid (LTA). The loading of thioester-linked D-alanine onto DltC is catalyzed by D-alanine--D-alanyl carrier protein ligase DltA. The DltC-carried D-alanyl group is further transferred to cell membrane phosphatidylglycerol (PG) by forming an ester bond, probably catalyzed by DltD. D-alanylation of LTA plays an important role in modulating the properties of the cell wall in Gram-positive bacteria, influencing the net charge of the cell wall. This is D-alanyl carrier protein from Bacillus anthracis (strain CDC 684 / NRRL 3495).